We begin with the raw amino-acid sequence, 635 residues long: Glutamine--fructose-6-phosphate aminotransferase [isomerizing] (635 aa).

The active-site Nucleophile; for GATase activity is cysteine 2. A Glutamine amidotransferase type-2 domain is found at 2–218 (CGIVGMVAGR…EGDIADVHRD (217 aa)). 2 SIS domains span residues 299–439 (FERL…AKKI) and 472–625 (CARH…IDQP). The active-site For Fru-6P isomerization activity is the lysine 630.

As to quaternary structure, homodimer.

It localises to the cytoplasm. It catalyses the reaction D-fructose 6-phosphate + L-glutamine = D-glucosamine 6-phosphate + L-glutamate. Catalyzes the first step in hexosamine metabolism, converting fructose-6P into glucosamine-6P using glutamine as a nitrogen source. The protein is Glutamine--fructose-6-phosphate aminotransferase [isomerizing] of Treponema pallidum (strain Nichols).